A 78-amino-acid polypeptide reads, in one-letter code: Small ribosomal subunit protein bS18 (78 aa).

Belongs to the bacterial ribosomal protein bS18 family. In terms of assembly, part of the 30S ribosomal subunit. Forms a tight heterodimer with protein bS6.

Its function is as follows. Binds as a heterodimer with protein bS6 to the central domain of the 16S rRNA, where it helps stabilize the platform of the 30S subunit. The chain is Small ribosomal subunit protein bS18 from Geobacillus sp. (strain WCH70).